The primary structure comprises 138 residues: Putative nickel-responsive regulator (138 aa).

Ni(2+) contacts are provided by His-78, His-89, His-91, and Cys-97.

It belongs to the transcriptional regulatory CopG/NikR family. Requires Ni(2+) as cofactor.

Its function is as follows. Transcriptional regulator. This is Putative nickel-responsive regulator from Pyrococcus abyssi (strain GE5 / Orsay).